Here is a 173-residue protein sequence, read N- to C-terminus: Crossover junction endodeoxyribonuclease RuvC (173 aa).

Catalysis depends on residues aspartate 8, glutamate 67, and aspartate 139. Residues aspartate 8, glutamate 67, and aspartate 139 each coordinate Mg(2+).

It belongs to the RuvC family. In terms of assembly, homodimer which binds Holliday junction (HJ) DNA. The HJ becomes 2-fold symmetrical on binding to RuvC with unstacked arms; it has a different conformation from HJ DNA in complex with RuvA. In the full resolvosome a probable DNA-RuvA(4)-RuvB(12)-RuvC(2) complex forms which resolves the HJ. It depends on Mg(2+) as a cofactor.

Its subcellular location is the cytoplasm. It catalyses the reaction Endonucleolytic cleavage at a junction such as a reciprocal single-stranded crossover between two homologous DNA duplexes (Holliday junction).. The RuvA-RuvB-RuvC complex processes Holliday junction (HJ) DNA during genetic recombination and DNA repair. Endonuclease that resolves HJ intermediates. Cleaves cruciform DNA by making single-stranded nicks across the HJ at symmetrical positions within the homologous arms, yielding a 5'-phosphate and a 3'-hydroxyl group; requires a central core of homology in the junction. The consensus cleavage sequence is 5'-(A/T)TT(C/G)-3'. Cleavage occurs on the 3'-side of the TT dinucleotide at the point of strand exchange. HJ branch migration catalyzed by RuvA-RuvB allows RuvC to scan DNA until it finds its consensus sequence, where it cleaves and resolves the cruciform DNA. The polypeptide is Crossover junction endodeoxyribonuclease RuvC (Shigella flexneri serotype 5b (strain 8401)).